An 82-amino-acid chain; its full sequence is Acyl carrier protein (82 aa).

One can recognise a Carrier domain in the interval 4-79; that stretch reads PEMESRLKKI…DALNYIEQKL (76 aa). Residue S39 is modified to O-(pantetheine 4'-phosphoryl)serine.

This sequence belongs to the acyl carrier protein (ACP) family. Post-translationally, 4'-phosphopantetheine is transferred from CoA to a specific serine of apo-ACP by AcpS. This modification is essential for activity because fatty acids are bound in thioester linkage to the sulfhydryl of the prosthetic group.

It is found in the cytoplasm. Its pathway is lipid metabolism; fatty acid biosynthesis. Carrier of the growing fatty acid chain in fatty acid biosynthesis. In Roseiflexus sp. (strain RS-1), this protein is Acyl carrier protein.